The chain runs to 214 residues: Eukaryotic translation initiation factor 4E-1B (214 aa).

MRNA is bound by residues 53 to 54 (WQ), 99 to 100 (WE), 154 to 159 (RAKGDK), and 202 to 204 (TKS).

In terms of tissue distribution, ovary, muscle and testis.

Its subcellular location is the cytoplasm. It localises to the nucleus. In terms of biological role, does not appear to be a mRNA-cap-binding protein. This is Eukaryotic translation initiation factor 4E-1B from Danio rerio (Zebrafish).